Here is a 718-residue protein sequence, read N- to C-terminus: Origin of replication complex subunit 3 (718 aa).

Positions 26–43 are enriched in low complexity; sequence GAAASSSSSSAPSLPSSG. Residues 26–75 form a disordered region; sequence GAAASSSSSSAPSLPSSGRARRRIDVSGLASPNPKPGKRSRDDDAAEDDD. The short motif at 659–666 is the Nuclear localization signal element; that stretch reads IKRKPHTS.

Belongs to the ORC3 family. As to quaternary structure, component of the origin recognition complex (ORC) composed of at least ORC1, ORC2, ORC3, ORC4, ORC5 and ORC6. ORC is regulated in a cell-cycle and development dependent manner. It is sequentially assembled at the exit from anaphase of mitosis and disassembled as cells enter S phase. Expressed at low levels in the shoot apical meristem (SAM), leaves, ears and roots (including root tips).

The protein resides in the nucleus. Component of the origin recognition complex (ORC) that binds origins of replication. DNA-binding is ATP-dependent. The specific DNA sequences that define origins of replication have not been identified yet. This chain is Origin of replication complex subunit 3, found in Oryza sativa subsp. japonica (Rice).